We begin with the raw amino-acid sequence, 496 residues long: Lysine--tRNA ligase (496 aa).

Residues E405 and E412 each contribute to the Mg(2+) site.

The protein belongs to the class-II aminoacyl-tRNA synthetase family. Homodimer. It depends on Mg(2+) as a cofactor.

It is found in the cytoplasm. The enzyme catalyses tRNA(Lys) + L-lysine + ATP = L-lysyl-tRNA(Lys) + AMP + diphosphate. This Vesicomyosocius okutanii subsp. Calyptogena okutanii (strain HA) protein is Lysine--tRNA ligase.